The primary structure comprises 163 residues: Small heat shock protein C4 (163 aa).

Positions 53–163 constitute a sHSP domain; that stretch reads YNNKILSPRT…QSKAKKIKIS (111 aa).

It belongs to the small heat shock protein (HSP20) family.

The chain is Small heat shock protein C4 (hspc4-1) from Rickettsia felis (strain ATCC VR-1525 / URRWXCal2) (Rickettsia azadi).